Here is an 89-residue protein sequence, read N- to C-terminus: UPF0237 protein LMOf2365_0562 (89 aa).

One can recognise an ACT domain in the interval 4 to 78 (VLTVIGKDNV…EDLQVKIHIQ (75 aa)).

Belongs to the UPF0237 family.

In Listeria monocytogenes serotype 4b (strain F2365), this protein is UPF0237 protein LMOf2365_0562.